Reading from the N-terminus, the 102-residue chain is Large ribosomal subunit protein bL21 (102 aa).

Belongs to the bacterial ribosomal protein bL21 family. As to quaternary structure, part of the 50S ribosomal subunit. Contacts protein L20.

Its function is as follows. This protein binds to 23S rRNA in the presence of protein L20. This chain is Large ribosomal subunit protein bL21, found in Stenotrophomonas maltophilia (strain K279a).